A 366-amino-acid chain; its full sequence is Galactoside alpha-(1,2)-fucosyltransferase 1 (366 aa).

The Cytoplasmic portion of the chain corresponds to methionine 1–histidine 8. The helical; Signal-anchor for type II membrane protein transmembrane segment at leucine 9–phenylalanine 25 threads the bilayer. Topologically, residues leucine 26 to proline 366 are lumenal. Residues asparagine 66, asparagine 302, and asparagine 328 are each glycosylated (N-linked (GlcNAc...) asparagine).

The protein belongs to the glycosyltransferase 11 family.

The protein resides in the golgi apparatus. Its subcellular location is the golgi stack membrane. It carries out the reaction a beta-D-galactosyl-(1-&gt;4)-N-acetyl-beta-D-glucosaminyl derivative + GDP-beta-L-fucose = an alpha-L-Fuc-(1-&gt;2)-beta-D-Gal-(1-&gt;4)-beta-D-GlcNAc derivative + GDP + H(+). The catalysed reaction is a ganglioside GA1 + GDP-beta-L-fucose = a ganglioside Fuc-GA1 + GDP + H(+). It catalyses the reaction a beta-D-Gal-(1-&gt;3)-beta-D-GlcNAc-(1-&gt;3)-beta-D-Gal-(1-&gt;4)-beta-D-Glc-(1&lt;-&gt;1')-Cer(d18:1(4E)) + GDP-beta-L-fucose = alpha-L-fucosyl-(1-&gt;2)- beta-D-galactosyl-(1-&gt;3)-N-acetyl-beta-D-glucosaminyl-(1-&gt;3)-beta-D-galactosyl-(1-&gt;4)-beta-D-glucosyl-(1&lt;-&gt;1')-N-acylsphing-4-enine + GDP + H(+). The enzyme catalyses a neolactoside nLc4Cer(d18:1(4E)) + GDP-beta-L-fucose = a neolactoside IV(2)-alpha-Fuc-nLc4Cer(d18:1(4E)) + GDP + H(+). It carries out the reaction a ganglioside GM1 + GDP-beta-L-fucose = a ganglioside Fuc-GM1 + GDP + H(+). The catalysed reaction is beta-D-galactosyl-(1-&gt;3)-N-acetyl-D-galactosamine + GDP-beta-L-fucose = alpha-L-fucosyl-(1-&gt;2)-beta-D-galactosyl-(1-&gt;3)-N-acetyl-D-galactosamine + GDP + H(+). The protein operates within protein modification; protein glycosylation. Functionally, catalyzes the transfer of L-fucose, from a guanosine diphosphate-beta-L-fucose, to the terminal galactose residue of glycoconjugates through an alpha(1,2) linkage leading to H antigen synthesis that is an intermediate substrate in the synthesis of ABO blood group antigens. H antigen is essential for maturation of the glomerular layer of the main olfactory bulb, in cell migration and early cell-cell contacts during tumor associated angiogenesis. Preferentially fucosylates soluble lactose and to a lesser extent fucosylates glycolipids gangliosides GA1 and GM1a. The protein is Galactoside alpha-(1,2)-fucosyltransferase 1 of Aotus nancymaae (Ma's night monkey).